Consider the following 193-residue polypeptide: uncharacterized protein (193 aa).

The disordered stretch occupies residues 55–94 (PVGGAAGARSLSQALPAPAPPPPPPPGLGPSSERPWPSPW). A compositionally biased stretch (pro residues) spans 71–82 (APAPPPPPPPGL).

This is an uncharacterized protein from Homo sapiens (Human).